Reading from the N-terminus, the 343-residue chain is Selenide, water dikinase (343 aa).

The active site involves selenocysteine 16. Selenocysteine 16 is a non-standard amino acid (selenocysteine). Residues lysine 19 and 46–48 (GAE) contribute to the ATP site. Aspartate 49 serves as a coordination point for Mg(2+). ATP is bound by residues aspartate 66, aspartate 89, and 137–139 (GHT). Residue aspartate 89 participates in Mg(2+) binding. Mg(2+) is bound at residue aspartate 225.

This sequence belongs to the selenophosphate synthase 1 family. Class I subfamily. Homodimer. The cofactor is Mg(2+).

The catalysed reaction is hydrogenselenide + ATP + H2O = selenophosphate + AMP + phosphate + 2 H(+). Functionally, synthesizes selenophosphate from selenide and ATP. The protein is Selenide, water dikinase of Geobacter sp. (strain M21).